The following is a 760-amino-acid chain: Probable ATP-dependent RNA helicase DDX27 (760 aa).

Positions 1–50 are disordered; that stretch reads MLAELGFIRTIGENDEVPVEPESDSGDEEEEGPIVLGRKQKALQKNRSAD. Residues 13 to 32 show a composition bias toward acidic residues; it reads ENDEVPVEPESDSGDEEEEG. S23, S25, and S48 each carry phosphoserine. The short motif at 55 to 57 is the Required for interaction with the PEBOW complex element; it reads FVF. Positions 80–149 are disordered; that stretch reads KRAATTLDEK…TDYSSEDEEI (70 aa). Residues 98 to 122 are compositionally biased toward basic and acidic residues; sequence KAEDKEAKSGKVEEKEGQADSDLKG. Over residues 126-148 the composition is skewed to acidic residues; sequence PGEDEAGSKDEDSETDYSSEDEE. S133 and S144 each carry phosphoserine. The Nuclear localization signal signature appears at 157 to 166; that stretch reads KVKEKKKKKK. Positions 184 to 212 match the Q motif motif; that stretch reads LSFQDMNLSRPLLKAITAMGFKQPTPIQK. Positions 215 to 389 constitute a Helicase ATP-binding domain; the sequence is IPVGLLGKDI…SVSLKNPVRI (175 aa). 228-235 lines the ATP pocket; the sequence is AATGTGKT. Residues 337-340 carry the DEAD box motif; that stretch reads DEAD. In terms of domain architecture, Helicase C-terminal spans 419–569; it reads IVAALLMRTF…DVILKFRDKI (151 aa). Disordered regions lie at residues 605–624 and 679–760; these read KGKE…TKEE and RLAK…KRKK. 2 stretches are compositionally biased toward basic residues: residues 682–691 and 744–760; these read KRNRRTKRAR and RQRR…KRKK.

The protein belongs to the DEAD box helicase family. DDX27/DRS1 subfamily. Associates with PeBoW complex, composed of BOP1, PES1 and WDR12. Interacts directly with BOP1 and PES1.

It is found in the nucleus. Its subcellular location is the nucleolus. The protein resides in the chromosome. It carries out the reaction ATP + H2O = ADP + phosphate + H(+). Functionally, probable ATP-dependent RNA helicase. Component of the nucleolar ribosomal RNA (rRNA) processing machinery that regulates 3' end formation of ribosomal 47S rRNA. The protein is Probable ATP-dependent RNA helicase DDX27 (Ddx27) of Mus musculus (Mouse).